Consider the following 332-residue polypeptide: 2,3-diketo-L-gulonate reductase (332 aa).

Catalysis depends on histidine 44, which acts as the Proton donor. Residues 168 to 174 (ITMVDMS), 224 to 225 (WK), and 304 to 306 (GHE) contribute to the NAD(+) site.

The protein belongs to the LDH2/MDH2 oxidoreductase family. DlgD subfamily. In terms of assembly, homodimer.

It localises to the cytoplasm. It carries out the reaction 3-dehydro-L-gulonate + NAD(+) = 2,3-dioxo-L-gulonate + NADH + H(+). The catalysed reaction is 3-dehydro-L-gulonate + NADP(+) = 2,3-dioxo-L-gulonate + NADPH + H(+). Functionally, catalyzes the reduction of 2,3-diketo-L-gulonate in the presence of NADH, to form 3-keto-L-gulonate. The polypeptide is 2,3-diketo-L-gulonate reductase (Salmonella agona (strain SL483)).